An 875-amino-acid polypeptide reads, in one-letter code: Probable serine/threonine-protein kinase samkC (875 aa).

A compositionally biased stretch (polar residues) spans 1-12 (METTTITSILDD). The segment at 1-47 (METTTITSILDDNNNNNNNNNNNNNNNNNNNNNNNNNNNNNNNNNYN) is disordered. Positions 13–45 (NNNNNNNNNNNNNNNNNNNNNNNNNNNNNNNNN) are enriched in low complexity. One can recognise an SAM domain in the interval 51–116 (WDNEMVCKWL…SEFDDLKNIF (66 aa)). Residues 135–162 (DNNNLNNLNNNNNNNNNNNNNNNNNNNN) adopt a coiled-coil conformation. A compositionally biased stretch (low complexity) spans 136–168 (NNNLNNLNNNNNNNNNNNNNNNNNNNNNNNNNN). The segment at 136–170 (NNNLNNLNNNNNNNNNNNNNNNNNNNNNNNNNNKT) is disordered. The Protein kinase domain maps to 181–452 (YVFIKQMKGS…SKQLLNFSWF (272 aa)). ATP is bound by residues 187–195 (MKGSVNCSL) and Lys210. Asp301 serves as the catalytic Proton acceptor. Disordered stretches follow at residues 331–362 (NNND…NDTN) and 461–718 (SEPQ…NNNN). Low complexity predominate over residues 474–554 (PQTSQSKPKP…KPKPSSSLSS (81 aa)). The span at 555–564 (EPPPLEPQPK) shows a compositional bias: pro residues. 3 stretches are compositionally biased toward low complexity: residues 565–581 (PQTS…LSSS), 589–611 (QPTQ…SQPT), and 617–653 (QPKS…QQQK). Residues 626–655 (QSKQQQQQQQQQQQQQQQQQQQQQQQQKSK) adopt a coiled-coil conformation. Basic and acidic residues predominate over residues 654–663 (SKPEQSKSKP). Residues 664-718 (EQSQSKPQPGQPLQSPSKPQPIPSTTKTTTTTTTTTTPNNNNNNNNNNNNNNNNN) are compositionally biased toward low complexity. The helical transmembrane segment at 842-862 (TLILYTFYYFLSNTLIYQIIL) threads the bilayer.

It belongs to the protein kinase superfamily. Ser/Thr protein kinase family.

The protein resides in the membrane. It catalyses the reaction L-seryl-[protein] + ATP = O-phospho-L-seryl-[protein] + ADP + H(+). The catalysed reaction is L-threonyl-[protein] + ATP = O-phospho-L-threonyl-[protein] + ADP + H(+). The sequence is that of Probable serine/threonine-protein kinase samkC (samkC) from Dictyostelium discoideum (Social amoeba).